The chain runs to 389 residues: MIQSILDNDLYKFTMQQAVHMLYPRVDVEYEFINRSNTPFPKDFAQRLQVEVQGMKNFRLTPEEKEYLDKTCYFMTPVYLDFLEHYTFDPDEVTVSQTNSELSVTIKGPWYRTILWEVPLMAIISELYFVMTNARPLPDEQIRVINLNKAKILSCNNIRYADFGTRRRFSSSGHEALIRDILALEHNTLIGTSNVNLARLFNIKPIGTMAHEWIMFHGVLNGYRMANPTAVAAWATAFHGHLGIALTDTFTTDIFLSTFDTLHAKLFDGVRHDSGDPIAFIDRIVDHYKKLHIDPITKTIVFSDGLDIDKAVHIHNHCINRIRDSYGIGTNLTNDVGVTPLNMVIKLAKCRTAPEKDWHNAIKLSDDKGKHTGDSEELAHCIKVLERGM.

H211 carries the post-translational modification Phosphohistidine; by autocatalysis.

This sequence belongs to the NAPRTase family. In terms of processing, transiently phosphorylated on a His residue during the reaction cycle. Phosphorylation strongly increases the affinity for substrates and increases the rate of nicotinate D-ribonucleotide production. Dephosphorylation regenerates the low-affinity form of the enzyme, leading to product release.

The catalysed reaction is nicotinate + 5-phospho-alpha-D-ribose 1-diphosphate + ATP + H2O = nicotinate beta-D-ribonucleotide + ADP + phosphate + diphosphate. The protein operates within cofactor biosynthesis; NAD(+) biosynthesis; nicotinate D-ribonucleotide from nicotinate: step 1/1. Its function is as follows. Catalyzes the synthesis of beta-nicotinate D-ribonucleotide from nicotinate and 5-phospho-D-ribose 1-phosphate at the expense of ATP. The chain is Nicotinate phosphoribosyltransferase from Desulforapulum autotrophicum (strain ATCC 43914 / DSM 3382 / VKM B-1955 / HRM2) (Desulfobacterium autotrophicum).